We begin with the raw amino-acid sequence, 559 residues long: Hepatocyte nuclear factor 1-beta (559 aa).

Positions 1–31 (MVSKLTSLQQELLSALLSSGVTKEVLVQALE) are dimerization. Residues 1–32 (MVSKLTSLQQELLSALLSSGVTKEVLVQALEE) form the HNF-p1 domain. Residues S49, S52, S75, and S80 each carry the phosphoserine modification. In terms of domain architecture, POU-specific atypical spans 93 to 188 (KELQALNTEE…ILRQFNQTVQ (96 aa)). The segment at residues 231-312 (MRRNRFKWGP…RRKEEEAFRQ (82 aa)) is a DNA-binding region (homeobox; HNF1-type). Over residues 328–341 (NTLLSHSSPHHQPS) the composition is skewed to low complexity. The disordered stretch occupies residues 328-371 (NTLLSHSSPHHQPSTSPPNKLPGVRYNQQGNNEVTSSSTISHHG). The span at 353–371 (YNQQGNNEVTSSSTISHHG) shows a compositional bias: polar residues.

Belongs to the HNF1 homeobox family. As to quaternary structure, binds DNA as a dimer. Can form homodimer or heterodimer with HNF1-alpha. Interacts (via HNF-p1 domain) with PCBD1; the interaction increases its transactivation activity.

Its subcellular location is the nucleus. Functionally, transcription factor that binds to the inverted palindrome 5'-GTTAATNATTAAC-3'. Binds to the FPC element in the cAMP regulatory unit of the PLAU gene. Transcriptional activity is increased by coactivator PCBD1. The sequence is that of Hepatocyte nuclear factor 1-beta (HNF1B) from Sus scrofa (Pig).